A 129-amino-acid polypeptide reads, in one-letter code: Phosphoribosyl-AMP cyclohydrolase (129 aa).

Asp76 lines the Mg(2+) pocket. Cys77 provides a ligand contact to Zn(2+). Mg(2+) is bound by residues Asp78 and Asp80. Zn(2+)-binding residues include Cys97 and Cys104.

This sequence belongs to the PRA-CH family. Homodimer. Requires Mg(2+) as cofactor. Zn(2+) is required as a cofactor.

The protein resides in the cytoplasm. It carries out the reaction 1-(5-phospho-beta-D-ribosyl)-5'-AMP + H2O = 1-(5-phospho-beta-D-ribosyl)-5-[(5-phospho-beta-D-ribosylamino)methylideneamino]imidazole-4-carboxamide. It participates in amino-acid biosynthesis; L-histidine biosynthesis; L-histidine from 5-phospho-alpha-D-ribose 1-diphosphate: step 3/9. Its function is as follows. Catalyzes the hydrolysis of the adenine ring of phosphoribosyl-AMP. The polypeptide is Phosphoribosyl-AMP cyclohydrolase (Methylibium petroleiphilum (strain ATCC BAA-1232 / LMG 22953 / PM1)).